The chain runs to 225 residues: KDP operon transcriptional regulatory protein KdpE (225 aa).

One can recognise a Response regulatory domain in the interval 3–116; the sequence is NVLIVEDEQA…ELQARLRVAL (114 aa). Position 52 is a 4-aspartylphosphate (D52). The segment at residues 126-225 is a DNA-binding region (ompR/PhoB-type); that stretch reads DPLVKFSDVT…ETGIGYRFML (100 aa).

Phosphorylated by KdpD.

The protein resides in the cytoplasm. In terms of biological role, member of the two-component regulatory system KdpD/KdpE involved in the regulation of the kdp operon. This is KDP operon transcriptional regulatory protein KdpE (kdpE) from Escherichia coli (strain K12).